Here is a 224-residue protein sequence, read N- to C-terminus: Lipoprotein-releasing system ATP-binding protein LolD (224 aa).

The ABC transporter domain maps to 5–224 (LVLDGLTKAY…VVRLEAGRVV (220 aa)). 42–49 (APSGAGKS) contributes to the ATP binding site.

This sequence belongs to the ABC transporter superfamily. Lipoprotein translocase (TC 3.A.1.125) family. As to quaternary structure, the complex is composed of two ATP-binding proteins (LolD) and two transmembrane proteins (LolC and LolE).

Its subcellular location is the cell inner membrane. In terms of biological role, part of the ABC transporter complex LolCDE involved in the translocation of mature outer membrane-directed lipoproteins, from the inner membrane to the periplasmic chaperone, LolA. Responsible for the formation of the LolA-lipoprotein complex in an ATP-dependent manner. This Cereibacter sphaeroides (strain ATCC 17023 / DSM 158 / JCM 6121 / CCUG 31486 / LMG 2827 / NBRC 12203 / NCIMB 8253 / ATH 2.4.1.) (Rhodobacter sphaeroides) protein is Lipoprotein-releasing system ATP-binding protein LolD.